The primary structure comprises 246 residues: 3'(2'),5'-bisphosphate nucleotidase CysQ (246 aa).

Mg(2+) is bound by residues E64, D83, L85, D86, and D205. Residue E64 participates in substrate binding. Residues 85–88 and D205 contribute to the substrate site; that span reads LDGT.

The protein belongs to the inositol monophosphatase superfamily. CysQ family. Mg(2+) serves as cofactor.

Its subcellular location is the cell inner membrane. The enzyme catalyses adenosine 3',5'-bisphosphate + H2O = AMP + phosphate. Inhibited by lithium and calcium. In terms of biological role, converts adenosine-3',5'-bisphosphate (PAP) to AMP. May also convert adenosine 3'-phosphate 5'-phosphosulfate (PAPS) to adenosine 5'-phosphosulfate (APS). Has 10000-fold lower activity towards inositol 1,4-bisphosphate (Ins(1,4)P2). The sequence is that of 3'(2'),5'-bisphosphate nucleotidase CysQ from Escherichia coli (strain K12).